A 328-amino-acid polypeptide reads, in one-letter code: N-acetyl-gamma-glutamyl-phosphate reductase (328 aa).

The active site involves Cys143.

The protein belongs to the NAGSA dehydrogenase family. Type 1 subfamily.

It localises to the cytoplasm. The enzyme catalyses N-acetyl-L-glutamate 5-semialdehyde + phosphate + NADP(+) = N-acetyl-L-glutamyl 5-phosphate + NADPH + H(+). It functions in the pathway amino-acid biosynthesis; L-arginine biosynthesis; N(2)-acetyl-L-ornithine from L-glutamate: step 3/4. In terms of biological role, catalyzes the NADPH-dependent reduction of N-acetyl-5-glutamyl phosphate to yield N-acetyl-L-glutamate 5-semialdehyde. The sequence is that of N-acetyl-gamma-glutamyl-phosphate reductase from Methanoregula boonei (strain DSM 21154 / JCM 14090 / 6A8).